The sequence spans 386 residues: GTPase Obg (386 aa).

Residues 1-159 enclose the Obg domain; sequence MKFVDEAKIK…RNLLLELLLL (159 aa). The 174-residue stretch at 160-333 folds into the OBG-type G domain; the sequence is ADVGMLGLPN…LCRDVVEYLE (174 aa). Residues 166-173, 191-195, 213-216, 283-286, and 314-316 contribute to the GTP site; these read GLPNAGKS, FTTLV, DIPG, NKTD, and AAI. Mg(2+)-binding residues include serine 173 and threonine 193.

It belongs to the TRAFAC class OBG-HflX-like GTPase superfamily. OBG GTPase family. As to quaternary structure, monomer. The cofactor is Mg(2+).

It localises to the cytoplasm. An essential GTPase which binds GTP, GDP and possibly (p)ppGpp with moderate affinity, with high nucleotide exchange rates and a fairly low GTP hydrolysis rate. Plays a role in control of the cell cycle, stress response, ribosome biogenesis and in those bacteria that undergo differentiation, in morphogenesis control. In Psychromonas ingrahamii (strain DSM 17664 / CCUG 51855 / 37), this protein is GTPase Obg.